Reading from the N-terminus, the 330-residue chain is GDP-mannose transporter (330 aa).

At 1 to 13 the chain is on the cytoplasmic side; sequence MSQLKVDNGPLSH. Residues 14 to 34 form a helical membrane-spanning segment; sequence VANSGPISIGAYCFSSIMMTV. Over 35 to 48 the chain is Lumenal; that stretch reads TNKFVVNLKGFNMN. A helical membrane pass occupies residues 49–69; sequence FVMLFVQAAVCVNLLFFLRLL. Residues 70-81 lie on the Cytoplasmic side of the membrane; sequence GYAKFRPLNRTD. Residues 82–98 traverse the membrane as a helical segment; sequence AKNWFPITIFLVLMIYT. Over 99–104 the chain is Lumenal; the sequence is SSKSLQ. A helical membrane pass occupies residues 105 to 124; that stretch reads YLAVPIYTIFKNLTIILIAY. Residues 125–138 are Cytoplasmic-facing; the sequence is GEVLFFGGSVTAME. The chain crosses the membrane as a helical span at residues 139–155; it reads LSSFLLMVLSSVVATLG. The Lumenal portion of the chain corresponds to 156–170; it reads DQQALKKTADAGASL. A helical transmembrane segment spans residues 171–191; the sequence is FNIGYMWMFINCLSSAAFVLV. Residues 192–203 are Cytoplasmic-facing; the sequence is MRKRIKLTNFKD. A helical transmembrane segment spans residues 204–224; sequence FDTMFYNNILSMPVLLALSFL. Over 225-241 the chain is Lumenal; it reads MEDWSTENLTKNLSRDS. The chain crosses the membrane as a helical span at residues 242–262; it reads VTAMIISGMTAVCISYCSGWC. Residues 263 to 269 lie on the Cytoplasmic side of the membrane; that stretch reads VRVTSST. A helical membrane pass occupies residues 270–290; that stretch reads TYSMVGALNKLPIALSGLIFF. The Lumenal portion of the chain corresponds to 291-294; it reads DAPK. The chain crosses the membrane as a helical span at residues 295-315; sequence NFLSIFSIFLGFLSGIVYAVA. Residues 316–330 are Cytoplasmic-facing; it reads KQKKQQNPQPSAPIK.

This sequence belongs to the TPT transporter family. SLC35D subfamily. As to quaternary structure, homooligomer.

It is found in the golgi apparatus membrane. It localises to the cytoplasmic vesicle membrane. Its subcellular location is the endoplasmic reticulum membrane. Its function is as follows. Involved in the import of GDP-mannose from the cytoplasm into the Golgi lumen. The protein is GDP-mannose transporter (VRG4) of Kluyveromyces lactis (strain ATCC 8585 / CBS 2359 / DSM 70799 / NBRC 1267 / NRRL Y-1140 / WM37) (Yeast).